The primary structure comprises 420 residues: MYKKLYLIGILLLGLISGLTFNLIFFTVPYQLSEAKYTTDIVGSISLAAFPYCLKVIWSPFIDKYSIPFLGVKFGHRRGWALVSQIFLILTMMWFLKRSPCNNLCITAIILFIIAFCSSTQDIVLDAYRIERTTSKKELSIAFTFSSIGFRLGMLLGSVGALYSSIIFGWNTVYKFALFITMVGPIVILCIKEPELKTKRNTTNNLIDLQQYFEVIKKSIISFKNEQKYLLLIILFVFLYKAADSIPMAMSIPLFLDLSFTTHEIAVIYKAYGLLIMIVGGTLGGILAAKIGIFHSVLIGGVIQLLSPIMFMILATIGYDIKTFIITITIQNFCSGFAGTIISIYFASLCNSEFVATQYSISSSFSSLSRIILASLGGICAKHLTWPVFFLCNTLFSMLFIPIFYIYRKKLHFINYSKKI.

The next 12 helical transmembrane spans lie at 6 to 26 (YLIG…LIFF), 41 to 61 (IVGS…WSPF), 79 to 99 (GWAL…LKRS), 104 to 124 (LCIT…QDIV), 141 to 161 (IAFT…SVGA), 166 to 186 (IIFG…VGPI), 230 to 250 (LLLI…PMAM), 274 to 294 (LLIM…IGIF), 297 to 317 (VLIG…LATI), 324 to 344 (FIIT…IISI), 359 to 381 (YSIS…GICA), and 386 to 406 (WPVF…IFYI).

It belongs to the major facilitator superfamily.

It is found in the cell inner membrane. The protein is Putative transporter AmpG 3 (ampG3) of Rickettsia typhi (strain ATCC VR-144 / Wilmington).